An 814-amino-acid chain; its full sequence is Acyl-coenzyme A dehydrogenase (814 aa).

Glu497 acts as the Proton acceptor in catalysis.

The protein belongs to the acyl-CoA dehydrogenase family. FAD is required as a cofactor.

The enzyme catalyses a medium-chain 2,3-saturated fatty acyl-CoA + oxidized [electron-transfer flavoprotein] + H(+) = a medium-chain (2E)-enoyl-CoA + reduced [electron-transfer flavoprotein]. The catalysed reaction is a long-chain 2,3-saturated fatty acyl-CoA + oxidized [electron-transfer flavoprotein] + H(+) = a long-chain (2E)-enoyl-CoA + reduced [electron-transfer flavoprotein]. Its pathway is lipid metabolism; fatty acid beta-oxidation. Catalyzes the dehydrogenation of acyl-coenzymes A (acyl-CoAs) to 2-enoyl-CoAs, the first step of the beta-oxidation cycle of fatty acid degradation. Is required for S.typhimurium to utilize medium- and long-chain fatty acids as sole carbon sources for growth. Is needed for bacterial survival during carbone-source starvation. This is Acyl-coenzyme A dehydrogenase (fadE) from Salmonella typhimurium (strain LT2 / SGSC1412 / ATCC 700720).